The sequence spans 907 residues: Cytochrome b561, DM13 and DOMON domain-containing protein At5g54830 (907 aa).

The N-terminal stretch at 1–24 (MCDQRPNLLGSLVLLGFFIFFVNG) is a signal peptide. Positions 31–139 (SSLIGHESEF…ASDFGHVLLS (109 aa)) constitute a DM13 domain. The disordered stretch occupies residues 144–172 (SDTSKAESPPSESNDVAPGKSNNSEPFKA). Positions 153–168 (PSESNDVAPGKSNNSE) are enriched in polar residues. DOMON domains lie at 184–329 (DKYR…WALG) and 524–645 (QQVK…WAMG). The Cytochrome b561 domain occupies 653–850 (LTERNMHSVT…CVVTVAYLEY (198 aa)). Residues 685-705 (VLGVHGFMMFLAWGILLPGGI) traverse the membrane as a helical segment. Heme b contacts are provided by histidine 689 and histidine 723. Transmembrane regions (helical) follow at residues 730-750 (GLAI…GFSF), 754-774 (HVKF…NAWL), 795-815 (SHSI…FTGM), and 829-849 (GLNL…AYLE). Residues histidine 754 and histidine 796 each contribute to the heme b site. A compositionally biased stretch (basic and acidic residues) spans 884-897 (GGFRDKDDEDRNGG). Residues 884–907 (GGFRDKDDEDRNGGRMEIQLEPLK) are disordered.

It depends on heme b as a cofactor.

The protein resides in the membrane. May act as a catecholamine-responsive trans-membrane electron transporter. The chain is Cytochrome b561, DM13 and DOMON domain-containing protein At5g54830 from Arabidopsis thaliana (Mouse-ear cress).